The chain runs to 140 residues: MANSASGMHVNDECKIKFLELKAKRTYRFIVFKIDEKAQQVQIEKLGNPEETYDDFTSSIPDDECRYAVYDFDFTTEDNCQKSKIFFIAWSPDTSRVRSKMLYASSKDRFKREMEGIQVELQATDPSEMSLDIIKGRLNL.

At serine 6 the chain carries Phosphoserine. One can recognise an ADF-H domain in the interval 7–139 (GMHVNDECKI…SLDIIKGRLN (133 aa)).

It belongs to the actin-binding proteins ADF family. Expressed in the root trichoblast cells and developed root hairs.

The protein resides in the cytoplasm. It localises to the cytoskeleton. Its function is as follows. Actin-depolymerizing protein. Severs actin filaments (F-actin) and binds to actin monomers. This Arabidopsis thaliana (Mouse-ear cress) protein is Actin-depolymerizing factor 8 (ADF8).